Reading from the N-terminus, the 140-residue chain is Large ribosomal subunit protein uL16c (140 aa).

It belongs to the universal ribosomal protein uL16 family. In terms of assembly, part of the 50S ribosomal subunit.

It localises to the plastid. The protein localises to the chloroplast. In Cyanidium caldarium (Red alga), this protein is Large ribosomal subunit protein uL16c.